The chain runs to 248 residues: Triosephosphate isomerase (248 aa).

Substrate contacts are provided by Asn-11 and Lys-13. The active-site Electrophile is His-95. Residue Glu-165 is the Proton acceptor of the active site.

It belongs to the triosephosphate isomerase family. As to quaternary structure, homodimer.

The protein resides in the cytoplasm. It catalyses the reaction dihydroxyacetone phosphate = methylglyoxal + phosphate. It carries out the reaction D-glyceraldehyde 3-phosphate = dihydroxyacetone phosphate. It functions in the pathway carbohydrate degradation; glycolysis; D-glyceraldehyde 3-phosphate from glycerone phosphate: step 1/1. It participates in carbohydrate biosynthesis; gluconeogenesis. Functionally, triosephosphate isomerase is an extremely efficient metabolic enzyme that catalyzes the interconversion between dihydroxyacetone phosphate (DHAP) and D-glyceraldehyde-3-phosphate (G3P) in glycolysis and gluconeogenesis. Its function is as follows. It is also responsible for the non-negligible production of methylglyoxal a reactive cytotoxic side-product that modifies and can alter proteins, DNA and lipids. The sequence is that of Triosephosphate isomerase (TPI1) from Gallus gallus (Chicken).